Reading from the N-terminus, the 30-residue chain is Brevinin-2Ej (30 aa).

The cysteines at positions 24 and 30 are disulfide-linked.

Expressed by the skin glands.

It localises to the secreted. Shows antibacterial activity against representative Gram-negative and Gram-positive bacterial species, and hemolytic activity. This is Brevinin-2Ej from Pelophylax ridibundus (Marsh frog).